The sequence spans 518 residues: Sensor protein kinase HptS (518 aa).

Helical transmembrane passes span 20–40 and 222–242; these read IFPV…IYIW and GITL…FGFI. Residues 297–513 form the Histidine kinase domain; that stretch reads EQLIHSIEHT…LICYKIPLSR (217 aa). At H325 the chain carries Phosphohistidine; by autocatalysis.

Post-translationally, autophosphorylated.

The protein resides in the cell membrane. It carries out the reaction ATP + protein L-histidine = ADP + protein N-phospho-L-histidine.. Functionally, member of the two-component regulatory system HptS/HptR that regulates genes involved in hexose phosphate transport system in response to changes in extracellular phosphate sources. May act as a sensor protein kinase which is autophosphorylated at a histidine residue and transfers its phosphate group to the conserved aspartic acid residue in the regulatory domain of HptS. In turn, HptS antagonizes CcpA-dependent transcription of a subset of CcpA-regulated genes involved in antibiotic susceptibility. The polypeptide is Sensor protein kinase HptS (hptS) (Staphylococcus aureus (strain Mu50 / ATCC 700699)).